The chain runs to 164 residues: Low molecular weight protein-tyrosine-phosphatase (164 aa).

Cys-9 (nucleophile) is an active-site residue. Residue Arg-15 is part of the active site. Asp-128 serves as the catalytic Proton donor.

The protein belongs to the low molecular weight phosphotyrosine protein phosphatase family.

It catalyses the reaction O-phospho-L-tyrosyl-[protein] + H2O = L-tyrosyl-[protein] + phosphate. Functionally, acts on tyrosine phosphorylated proteins, low-MW aryl phosphates and natural and synthetic acyl phosphates. May be involved in the regulation of sulfur amino acid metabolism. This is Low molecular weight protein-tyrosine-phosphatase (ptpA) from Streptomyces coelicolor (strain ATCC BAA-471 / A3(2) / M145).